We begin with the raw amino-acid sequence, 779 residues long: Endonuclease MutS2 (779 aa).

Residue 328 to 335 participates in ATP binding; that stretch reads GPNTGGKT. A Smr domain is found at 704 to 779; sequence LDLRGKRYEE…GSGATIVTLG (76 aa).

It belongs to the DNA mismatch repair MutS family. MutS2 subfamily. Homodimer. Binds to stalled ribosomes, contacting rRNA.

Its function is as follows. Endonuclease that is involved in the suppression of homologous recombination and thus may have a key role in the control of bacterial genetic diversity. Functionally, acts as a ribosome collision sensor, splitting the ribosome into its 2 subunits. Detects stalled/collided 70S ribosomes which it binds and splits by an ATP-hydrolysis driven conformational change. Acts upstream of the ribosome quality control system (RQC), a ribosome-associated complex that mediates the extraction of incompletely synthesized nascent chains from stalled ribosomes and their subsequent degradation. Probably generates substrates for RQC. The chain is Endonuclease MutS2 from Streptococcus pyogenes serotype M1.